The primary structure comprises 448 residues: Protein king tubby (448 aa).

The disordered stretch occupies residues 103–195; that stretch reads HELEDEESSP…NGTGGESEGD (93 aa). The span at 118–133 shows a compositional bias: low complexity; sequence QHQQSASHSANSTQSQ. Ser-141 carries the post-translational modification Phosphoserine. Positions 182–191 are enriched in gly residues; sequence NGTGNGTGGE.

The protein belongs to the TUB family.

It is found in the cytoplasm. It localises to the nucleus. The protein resides in the cell projection. Its subcellular location is the cilium membrane. The protein localises to the rhabdomere. This chain is Protein king tubby, found in Drosophila erecta (Fruit fly).